A 149-amino-acid chain; its full sequence is Putative pre-16S rRNA nuclease (149 aa).

The protein belongs to the YqgF nuclease family.

The protein resides in the cytoplasm. In terms of biological role, could be a nuclease involved in processing of the 5'-end of pre-16S rRNA. This Synechococcus sp. (strain ATCC 27144 / PCC 6301 / SAUG 1402/1) (Anacystis nidulans) protein is Putative pre-16S rRNA nuclease.